The following is a 118-amino-acid chain: Ribonuclease P protein component (118 aa).

Belongs to the RnpA family. As to quaternary structure, consists of a catalytic RNA component (M1 or rnpB) and a protein subunit.

It carries out the reaction Endonucleolytic cleavage of RNA, removing 5'-extranucleotides from tRNA precursor.. RNaseP catalyzes the removal of the 5'-leader sequence from pre-tRNA to produce the mature 5'-terminus. It can also cleave other RNA substrates such as 4.5S RNA. The protein component plays an auxiliary but essential role in vivo by binding to the 5'-leader sequence and broadening the substrate specificity of the ribozyme. This Bifidobacterium animalis subsp. lactis (strain AD011) protein is Ribonuclease P protein component.